The following is a 1035-amino-acid chain: Beta-galactosidase (1035 aa).

Asparagine 101 and aspartate 199 together coordinate substrate. Aspartate 199 is a Na(+) binding site. Mg(2+) contacts are provided by glutamate 415, histidine 417, and glutamate 460. Residues glutamate 460 and 540–543 (EYAH) each bind substrate. The active-site Proton donor is the glutamate 460. The active-site Nucleophile is the glutamate 540. Asparagine 600 contributes to the Mg(2+) binding site. The Na(+) site is built by phenylalanine 604 and asparagine 607. Residues asparagine 607 and tryptophan 1011 each coordinate substrate.

This sequence belongs to the glycosyl hydrolase 2 family. Homotetramer. Requires Mg(2+) as cofactor. Na(+) serves as cofactor.

It carries out the reaction Hydrolysis of terminal non-reducing beta-D-galactose residues in beta-D-galactosides.. This is Beta-galactosidase from Psychromonas ingrahamii (strain DSM 17664 / CCUG 51855 / 37).